The following is a 112-amino-acid chain: Large ribosomal subunit protein P2 (112 aa).

The disordered stretch occupies residues 81–112 (VETAEAKKEDKKEEKKEEEEEEEDDLGFSLFG). Positions 84–95 (AEAKKEDKKEEK) are enriched in basic and acidic residues. Positions 96-106 (KEEEEEEEDDL) are enriched in acidic residues.

It belongs to the eukaryotic ribosomal protein P1/P2 family. In terms of assembly, P1 and P2 exist as dimers at the large ribosomal subunit. Post-translationally, phosphorylated.

Plays an important role in the elongation step of protein synthesis. The polypeptide is Large ribosomal subunit protein P2 (MAL3P3.19) (Plasmodium falciparum (isolate 3D7)).